A 189-amino-acid chain; its full sequence is Chitin synthase 2 (189 aa).

The protein belongs to the chitin synthase family. Class II subfamily.

It is found in the cell membrane. It carries out the reaction [(1-&gt;4)-N-acetyl-beta-D-glucosaminyl](n) + UDP-N-acetyl-alpha-D-glucosamine = [(1-&gt;4)-N-acetyl-beta-D-glucosaminyl](n+1) + UDP + H(+). Functionally, polymerizes chitin, a structural polymer of the cell wall and septum, by transferring the sugar moiety of UDP-GlcNAc to the non-reducing end of the growing chitin polymer. The sequence is that of Chitin synthase 2 (CHS2) from Ajellomyces dermatitidis (Blastomyces dermatitidis).